A 500-amino-acid chain; its full sequence is L-arabinose isomerase (500 aa).

Mn(2+)-binding residues include glutamate 306, glutamate 333, histidine 350, and histidine 450.

This sequence belongs to the arabinose isomerase family. In terms of assembly, homohexamer. The cofactor is Mn(2+).

It catalyses the reaction beta-L-arabinopyranose = L-ribulose. Its pathway is carbohydrate degradation; L-arabinose degradation via L-ribulose; D-xylulose 5-phosphate from L-arabinose (bacterial route): step 1/3. Its function is as follows. Catalyzes the conversion of L-arabinose to L-ribulose. This is L-arabinose isomerase from Escherichia fergusonii (strain ATCC 35469 / DSM 13698 / CCUG 18766 / IAM 14443 / JCM 21226 / LMG 7866 / NBRC 102419 / NCTC 12128 / CDC 0568-73).